We begin with the raw amino-acid sequence, 645 residues long: Lipase 1 (645 aa).

The signal sequence occupies residues 1–24; it reads MKRSFIFAPGMLALSISAISNAHA. The active-site Nucleophile is the S34. Residues D327 and H330 contribute to the active site. The region spanning 383–645 is the Autotransporter domain; it reads NEQGKLGVFG…SFSLGVNASF (263 aa).

The protein belongs to the 'GDSL' lipolytic enzyme family.

Its subcellular location is the secreted. The enzyme catalyses a triacylglycerol + H2O = a diacylglycerol + a fatty acid + H(+). The sequence is that of Lipase 1 (lip-1) from Photorhabdus luminescens (Xenorhabdus luminescens).